The following is a 334-amino-acid chain: O(6)-methylguanine-induced apoptosis 2 (334 aa).

The disordered stretch occupies residues methionine 1–proline 60. Over residues lysine 7–glutamate 20 the composition is skewed to basic and acidic residues. The segment covering tyrosine 29–serine 42 has biased composition (polar residues). STPGR repeat units follow at residues proline 67–valine 74, proline 109–proline 117, proline 148–alanine 155, glycine 187–threonine 206, glycine 225–proline 257, proline 267–lysine 282, and leucine 306–leucine 316. Tyrosine 72 carries the post-translational modification Phosphotyrosine.

It belongs to the STPG1 family.

It localises to the cytoplasm. The protein localises to the nucleus. May positively contribute to the induction of apoptosis triggered by O(6)-methylguanine. This chain is O(6)-methylguanine-induced apoptosis 2 (STPG1), found in Homo sapiens (Human).